The chain runs to 386 residues: Succinate--CoA ligase [ADP-forming] subunit beta (386 aa).

The 236-residue stretch at 9 to 244 folds into the ATP-grasp domain; that stretch reads KDLLTSYAIP…PSQENVRDVL (236 aa). Residues lysine 46, 53 to 55, valine 102, and glutamate 107 each bind ATP; that span reads GRG. Mg(2+) is bound by residues asparagine 199 and aspartate 213. Substrate is bound by residues asparagine 264 and 321 to 323; that span reads GIM.

The protein belongs to the succinate/malate CoA ligase beta subunit family. In terms of assembly, heterotetramer of two alpha and two beta subunits. It depends on Mg(2+) as a cofactor.

The enzyme catalyses succinate + ATP + CoA = succinyl-CoA + ADP + phosphate. The catalysed reaction is GTP + succinate + CoA = succinyl-CoA + GDP + phosphate. It functions in the pathway carbohydrate metabolism; tricarboxylic acid cycle; succinate from succinyl-CoA (ligase route): step 1/1. In terms of biological role, succinyl-CoA synthetase functions in the citric acid cycle (TCA), coupling the hydrolysis of succinyl-CoA to the synthesis of either ATP or GTP and thus represents the only step of substrate-level phosphorylation in the TCA. The beta subunit provides nucleotide specificity of the enzyme and binds the substrate succinate, while the binding sites for coenzyme A and phosphate are found in the alpha subunit. This chain is Succinate--CoA ligase [ADP-forming] subunit beta, found in Chlamydia abortus (strain DSM 27085 / S26/3) (Chlamydophila abortus).